We begin with the raw amino-acid sequence, 659 residues long: uncharacterized protein (659 aa).

Residues 1–25 form the signal peptide; the sequence is MVKRRLSAFGNAFLIYFIIFRLCCC. The Lumenal portion of the chain corresponds to 26–556; it reads SPQTSHWCKY…LYQESSFQKR (531 aa). N94, N111, N128, and N142 each carry an N-linked (GlcNAc...) asparagine glycan. Positions 173–335 constitute an SUN domain; the sequence is AATIDSNIDE…SLLRVYGKTM (163 aa). N-linked (GlcNAc...) asparagine glycosylation is found at N393 and N415. The disordered stretch occupies residues 417–445; that stretch reads TGKSESYPATSTRSFNDISPSSSSSYSTA. Polar residues predominate over residues 423-434; the sequence is YPATSTRSFNDI. N-linked (GlcNAc...) asparagine glycans are attached at residues N495 and N504. A helical transmembrane segment spans residues 557–574; the sequence is LLMLQLTVLIVLTVYMAV. Over 575 to 659 the chain is Cytoplasmic; that stretch reads SRLPENLPTT…IIHSRSHSVC (85 aa). Disordered regions lie at residues 580–603 and 632–659; these read NLPTTRSSSNNPIEASRPPFSRDE and KRDPNTSIRSIHEREQDKIIHSRSHSVC. The segment covering 581-592 has biased composition (polar residues); that stretch reads LPTTRSSSNNPI. The span at 641–651 shows a compositional bias: basic and acidic residues; sequence SIHEREQDKII.

The protein belongs to the SLP1 family. As to quaternary structure, interacts with EMP65.

It is found in the endoplasmic reticulum membrane. In terms of biological role, may be involved in membrane protein folding. This is an uncharacterized protein from Schizosaccharomyces pombe (strain 972 / ATCC 24843) (Fission yeast).